A 336-amino-acid polypeptide reads, in one-letter code: Large ribosomal subunit protein uL10 (336 aa).

The tract at residues 305 to 336 (AVVATEEAPKAETKKEEKKEEAAPAAGLGLLF) is disordered. The segment covering 311 to 326 (EAPKAETKKEEKKEEA) has biased composition (basic and acidic residues).

It belongs to the universal ribosomal protein uL10 family. In terms of assembly, part of the 50S ribosomal subunit. Forms part of the ribosomal stalk which helps the ribosome interact with GTP-bound translation factors. Forms a heptameric L10(L12)2(L12)2(L12)2 complex, where L10 forms an elongated spine to which the L12 dimers bind in a sequential fashion.

Its function is as follows. Forms part of the ribosomal stalk, playing a central role in the interaction of the ribosome with GTP-bound translation factors. The protein is Large ribosomal subunit protein uL10 of Methanococcus vannielii (strain ATCC 35089 / DSM 1224 / JCM 13029 / OCM 148 / SB).